We begin with the raw amino-acid sequence, 188 residues long: Adrenodoxin, mitochondrial (188 aa).

A mitochondrion-targeting transit peptide spans 1-64 (MAAAPGARLL…RPLSVSARAR (64 aa)). Ser67 carries the post-translational modification Phosphoserine. Residues 69-175 (DKVTVHFKNR…NMTVRVPEAV (107 aa)) enclose the 2Fe-2S ferredoxin-type domain. Residue Lys70 is modified to N6-acetyllysine; alternate. An N6-succinyllysine; alternate modification is found at Lys70. [2Fe-2S] cluster-binding residues include Cys110, Cys116, Cys119, and Cys156. An N6-succinyllysine modification is found at Lys162. Ser181 carries the post-translational modification Phosphoserine.

The protein belongs to the adrenodoxin/putidaredoxin family. Interacts with CYP11A1. It depends on [2Fe-2S] cluster as a cofactor. In terms of tissue distribution, found in all tissues, most abundant in adrenals, ovaries and testes.

The protein localises to the mitochondrion matrix. Essential for the synthesis of various steroid hormones. Participates in the reduction of mitochondrial cytochrome P450 for steroidogenesis. Transfers electrons from adrenodoxin reductase to CYP11A1, a cytochrome P450 that catalyzes cholesterol side-chain cleavage. Does not form a ternary complex with adrenodoxin reductase and CYP11A1 but shuttles between the two enzymes to transfer electrons. This chain is Adrenodoxin, mitochondrial (Fdx1), found in Rattus norvegicus (Rat).